A 396-amino-acid chain; its full sequence is uncharacterized protein (396 aa).

K219 bears the N6-(pyridoxal phosphate)lysine mark.

Belongs to the class-V pyridoxal-phosphate-dependent aminotransferase family. Pyridoxal 5'-phosphate serves as cofactor.

The protein localises to the cytoplasm. The protein resides in the nucleus. This is an uncharacterized protein from Schizosaccharomyces pombe (strain 972 / ATCC 24843) (Fission yeast).